The primary structure comprises 337 residues: Glyceraldehyde-3-phosphate dehydrogenase 1, cytosolic (337 aa).

Residues 13-14 (RI), D35, and R82 each bind NAD(+). Residues 153–155 (SCT), T184, 213–214 (TG), and R236 contribute to the D-glyceraldehyde 3-phosphate site. The Nucleophile role is filled by C154. N318 lines the NAD(+) pocket.

This sequence belongs to the glyceraldehyde-3-phosphate dehydrogenase family. In terms of assembly, homotetramer. Phosphorylated after gibberellin treatment.

Its subcellular location is the cytoplasm. It carries out the reaction D-glyceraldehyde 3-phosphate + phosphate + NAD(+) = (2R)-3-phospho-glyceroyl phosphate + NADH + H(+). Its pathway is carbohydrate degradation; glycolysis; pyruvate from D-glyceraldehyde 3-phosphate: step 1/5. Functionally, key enzyme in glycolysis that catalyzes the first step of the pathway by converting D-glyceraldehyde 3-phosphate (G3P) into 3-phospho-D-glyceroyl phosphate. Essential for the maintenance of cellular ATP levels and carbohydrate metabolism. This is Glyceraldehyde-3-phosphate dehydrogenase 1, cytosolic (GAPC1) from Oryza sativa subsp. japonica (Rice).